The following is a 206-amino-acid chain: Carbonic anhydrase (206 aa).

K11 participates in a covalent cross-link: Isoglutamyl lysine isopeptide (Lys-Gln) (interchain with Q-Cter in protein Pup). Zn(2+)-binding residues include C51, D53, H104, and C107.

Belongs to the beta-class carbonic anhydrase family. As to quaternary structure, homotetramer. The cofactor is Zn(2+).

It catalyses the reaction hydrogencarbonate + H(+) = CO2 + H2O. Catalyzes the reversible hydration of carbon dioxide to form bicarbonate. The protein is Carbonic anhydrase (cynT) of Mycolicibacterium smegmatis (strain ATCC 700084 / mc(2)155) (Mycobacterium smegmatis).